An 879-amino-acid polypeptide reads, in one-letter code: Valine--tRNA ligase (879 aa).

The short motif at 45 to 55 is the 'HIGH' region element; the sequence is PNVTGKLHLGH. The short motif at 521–525 is the 'KMSKS' region element; it reads KMSKS. An ATP-binding site is contributed by lysine 524. Positions 806–879 form a coiled coil; that stretch reads LTELVNVDEE…ERIQDLKESK (74 aa).

This sequence belongs to the class-I aminoacyl-tRNA synthetase family. ValS type 1 subfamily. In terms of assembly, monomer.

Its subcellular location is the cytoplasm. It carries out the reaction tRNA(Val) + L-valine + ATP = L-valyl-tRNA(Val) + AMP + diphosphate. Functionally, catalyzes the attachment of valine to tRNA(Val). As ValRS can inadvertently accommodate and process structurally similar amino acids such as threonine, to avoid such errors, it has a 'posttransfer' editing activity that hydrolyzes mischarged Thr-tRNA(Val) in a tRNA-dependent manner. This is Valine--tRNA ligase from Lactobacillus acidophilus (strain ATCC 700396 / NCK56 / N2 / NCFM).